The following is a 305-amino-acid chain: MHKLFILTGPTASGKSEVSKIVAERLGCTIINCDSKQIYQHVPTITDQAEYLRTSPQFRLYGYVHPSNSYSVGLWLEDAKREILLAWEKKSPTIVVGGSGLYISSLIYGLSEIPPADAHIRQKARALLSEVGNDTFFELLLRRDANVCKIDRRNSNQLLRAFEVFESTGVSIFSWRERCPKKRPFENCEVCVLFPPKEELHPKINSRLVDMINSSAVAEVEYLMSLNLPADAPIMKAIGVREVIEYLRGNISLPEAVEAAQRNTRQYAKRQYTWLRRQLPQDAQFLPTREEMVQHLVSRLTETEK.

9 to 16 is an ATP binding site; the sequence is GPTASGKS. 11–16 lines the substrate pocket; it reads TASGKS. The interval 34–37 is interaction with substrate tRNA; that stretch reads DSKQ.

It belongs to the IPP transferase family. In terms of assembly, monomer. The cofactor is Mg(2+).

It catalyses the reaction adenosine(37) in tRNA + dimethylallyl diphosphate = N(6)-dimethylallyladenosine(37) in tRNA + diphosphate. Catalyzes the transfer of a dimethylallyl group onto the adenine at position 37 in tRNAs that read codons beginning with uridine, leading to the formation of N6-(dimethylallyl)adenosine (i(6)A). This is tRNA dimethylallyltransferase from Anaplasma marginale (strain St. Maries).